Here is a 447-residue protein sequence, read N- to C-terminus: N-succinylarginine dihydrolase (447 aa).

Substrate is bound by residues 19–28, N110, and 137–138; these read AGLSFGNEAS and HR. E174 is an active-site residue. R212 provides a ligand contact to substrate. The active site involves H248. The substrate site is built by D250 and N359. C365 serves as the catalytic Nucleophile.

Belongs to the succinylarginine dihydrolase family. Homodimer.

It catalyses the reaction N(2)-succinyl-L-arginine + 2 H2O + 2 H(+) = N(2)-succinyl-L-ornithine + 2 NH4(+) + CO2. Its pathway is amino-acid degradation; L-arginine degradation via AST pathway; L-glutamate and succinate from L-arginine: step 2/5. Catalyzes the hydrolysis of N(2)-succinylarginine into N(2)-succinylornithine, ammonia and CO(2). The chain is N-succinylarginine dihydrolase from Salmonella dublin (strain CT_02021853).